Here is a 255-residue protein sequence, read N- to C-terminus: Microfibril-associated glycoprotein 4 (255 aa).

The N-terminal stretch at 1–20 (MEALLVLPLLLLLSAGPCAP) is a signal peptide. Positions 26–28 (RGD) match the Cell attachment site motif. Residues 32–255 (KSCLQLPLDC…KRTEMKIRRA (224 aa)) enclose the Fibrinogen C-terminal domain. Asparagine 87 and asparagine 137 each carry an N-linked (GlcNAc...) asparagine glycan.

As to quaternary structure, homodimer. Can also form higher oligomers. Interacts with FBN1, FBN2 and LOX. Interacts with COL1A1 in a Ca (2+)-dependent manner. Interacts with ELN in a Ca (2+)-dependent manner; this interaction promotes ELN self-assembly.

It localises to the secreted. The protein resides in the extracellular space. The protein localises to the extracellular matrix. In terms of biological role, could be involved in calcium-dependent cell adhesion or intercellular interactions. May contribute to the elastic fiber assembly and/or maintenance. This chain is Microfibril-associated glycoprotein 4 (MFAP4), found in Bos taurus (Bovine).